A 321-amino-acid chain; its full sequence is Glucokinase (321 aa).

8–13 (GDVGGT) contacts ATP.

This sequence belongs to the bacterial glucokinase family.

Its subcellular location is the cytoplasm. It carries out the reaction D-glucose + ATP = D-glucose 6-phosphate + ADP + H(+). Not highly important in E.coli as glucose is transported into the cell by the PTS system already as glucose 6-phosphate. This is Glucokinase from Escherichia coli O139:H28 (strain E24377A / ETEC).